The sequence spans 121 residues: UPF0231 protein ESA_03214 (121 aa).

Belongs to the UPF0231 family.

The protein is UPF0231 protein ESA_03214 of Cronobacter sakazakii (strain ATCC BAA-894) (Enterobacter sakazakii).